The sequence spans 412 residues: Indian hedgehog B protein (412 aa).

The first 23 residues, 1 to 23 (MRLSTAAALLTGFILAFSPAYDG), serve as a signal peptide directing secretion. Cys-24 is lipidated: N-palmitoyl cysteine. Ca(2+) contacts are provided by Glu-89, Glu-90, Asp-95, Thr-125, Glu-126, Asp-129, and Asp-131. Zn(2+)-binding residues include His-140, Asp-147, and His-182. Gly-197 carries Cholesterol glycine ester lipidation.

The protein belongs to the hedgehog family. As to quaternary structure, multimer. In terms of assembly, interacts with BOC and CDON. Interacts with PTCH1. Interacts with glypican GPC3. Post-translationally, cholesterylation is required for N-product targeting to lipid rafts and multimerization. The C-terminal domain displays an autoproteolysis activity and a cholesterol transferase activity. Both activities result in the cleavage of the full-length protein and covalent attachment of a cholesterol moiety to the C-terminal of the newly generated N-product. The N-product is the active species in both local and long-range signaling, whereas the C-product is degraded in the endoplasmic reticulum. In terms of processing, N-palmitoylation by HHAT of N-product is required for indian hedgehog protein N-product multimerization and full activity. In terms of tissue distribution, expressed exclusively in the notochord.

It is found in the cell membrane. The protein resides in the endoplasmic reticulum membrane. The protein localises to the golgi apparatus membrane. Its subcellular location is the secreted. It carries out the reaction glycyl-L-cysteinyl-[protein] + cholesterol + H(+) = [protein]-C-terminal glycyl cholesterol ester + N-terminal L-cysteinyl-[protein]. Functionally, signal involved in the early induction and patterning of anterodorsal ectoderm, nervous system and somites. It is involved in the regulation of endochondral skeleton formation, and the development of retinal pigment epithelium (RPE), photoreceptors and periocular tissues. The C-terminal part of the indian hedgehog protein precursor displays an autoproteolysis and a cholesterol transferase activity. Both activities result in the cleavage of the full-length protein into two parts followed by the covalent attachment of a cholesterol moiety to the C-terminal of the newly generated N-product. Both activities occur in the endoplasmic reticulum. Its function is as follows. The dually lipidated indian hedgehog protein N-product is a morphogen which is essential for a variety of patterning events during development. Binds to the patched (PTCH1) receptor, which functions in association with smoothened (SMO), to activate the transcription of target genes. In the notochord, induces somite patterning and muscle pioneer differentiation. The polypeptide is Indian hedgehog B protein (ihhb) (Danio rerio (Zebrafish)).